Consider the following 240-residue polypeptide: Spore coat polysaccharide biosynthesis protein SpsF (240 aa).

The protein belongs to the CMP-NeuNAc synthase family.

The protein operates within spore coat biogenesis; spore coat polysaccharide biosynthesis. The chain is Spore coat polysaccharide biosynthesis protein SpsF (spsF) from Bacillus subtilis (strain 168).